Here is a 446-residue protein sequence, read N- to C-terminus: Inward rectifier potassium channel 4 (446 aa).

Residues 1–55 (MHGHSRNGQAHVPRRKRRNRFVKKNGQCNVYFANLSNKSQRYMADIFTTCVDTRW) lie on the Cytoplasmic side of the membrane. A helical membrane pass occupies residues 56–80 (RYMLMIFSAAFLVSWLFFGLLFWCI). Residues 81–120 (AFFHGDLEPSPSGPTAGGPGGNGGGAAPTAAKPCIMHVNG) are Extracellular-facing. Positions 91 to 111 (PSGPTAGGPGGNGGGAAPTAA) are val/Gly/Ala/Pro stretch. Residues 121 to 132 (FLGAFLFSVETQ) constitute an intramembrane region (helical; Pore-forming). Residues 133–139 (TTIGYGF) constitute an intramembrane region (pore-forming). A Selectivity filter motif is present at residues 134–139 (TIGYGF). The Extracellular segment spans residues 140 to 148 (RCVTEECPL). Residues 149 to 170 (AVIAVVVQSIVGCVIDSFMIGT) traverse the membrane as a helical segment. Over 171–446 (IMAKMPRPKK…NISYRRESAI (276 aa)) the chain is Cytoplasmic. Positions 444–446 (SAI) match the PDZ-binding motif.

It belongs to the inward rectifier-type potassium channel (TC 1.A.2.1) family. KCNJ4 subfamily. In terms of assembly, homomultimeric and heteromultimeric association with KCNJ2 and KCNJ12. Interacts with DLG2 and DLG4. Associates, via its PDZ-recognition domain, with a complex containing LIN7A, LIN7B, LIN7C, DLG1, CASK and APBA1. Interacts with TAX1BP3. TAX1BP3 competes with LIN7 family members for KCNJ4 binding. In terms of tissue distribution, detected in kidney distal convoluted tubules (at protein level). Widely expressed throughout the brain. Also found in some peripheral tissues.

The protein resides in the cell membrane. It localises to the cytoplasmic vesicle membrane. Its subcellular location is the postsynaptic cell membrane. The catalysed reaction is K(+)(in) = K(+)(out). Inward rectifier potassium channels are characterized by a greater tendency to allow potassium to flow into the cell rather than out of it. Their voltage dependence is regulated by the concentration of extracellular potassium; as external potassium is raised, the voltage range of the channel opening shifts to more positive voltages. The inward rectification is mainly due to the blockage of outward current by internal magnesium. Can be blocked by extracellular barium and cesium. In Rattus norvegicus (Rat), this protein is Inward rectifier potassium channel 4 (Kcnj4).